Consider the following 519-residue polypeptide: Spermidine/putrescine import ATP-binding protein PotA (519 aa).

An ABC transporter domain is found at 6-401 (LHLRDITKIY…PNSLWVANFI (396 aa)). 39–46 (GPSGCGKT) contacts ATP. The segment at 107 to 270 (RKPKDNVDQS…EQFENKNITR (164 aa)) is insert.

Belongs to the ABC transporter superfamily. Spermidine/putrescine importer (TC 3.A.1.11.1) family. In terms of assembly, the complex is composed of two ATP-binding proteins (PotA), two transmembrane proteins (PotB and PotC) and a solute-binding protein (PotD).

It localises to the cell membrane. It catalyses the reaction ATP + H2O + polyamine-[polyamine-binding protein]Side 1 = ADP + phosphate + polyamineSide 2 + [polyamine-binding protein]Side 1.. Functionally, part of the ABC transporter complex PotABCD involved in spermidine/putrescine import. Responsible for energy coupling to the transport system. In Ureaplasma parvum serovar 3 (strain ATCC 700970), this protein is Spermidine/putrescine import ATP-binding protein PotA.